The following is a 107-amino-acid chain: UPF0145 protein CHY_0465 (107 aa).

This sequence belongs to the UPF0145 family.

This Carboxydothermus hydrogenoformans (strain ATCC BAA-161 / DSM 6008 / Z-2901) protein is UPF0145 protein CHY_0465.